The sequence spans 450 residues: Probable ECA polymerase (450 aa).

A run of 11 helical transmembrane segments spans residues Phe6 to Phe26, Val37 to Leu57, Val63 to Ala83, Val118 to Leu138, Gly155 to Leu175, Ala181 to Gly201, Ile207 to Trp227, Met228 to Tyr248, Leu341 to Ile361, Tyr378 to Ala398, and Val410 to Phe430.

This sequence belongs to the WzyE family. Probably part of a complex composed of WzxE, WzyE and WzzE.

The protein localises to the cell inner membrane. It participates in bacterial outer membrane biogenesis; enterobacterial common antigen biosynthesis. Functionally, probably involved in the polymerization of enterobacterial common antigen (ECA) trisaccharide repeat units. The chain is Probable ECA polymerase from Escherichia coli O139:H28 (strain E24377A / ETEC).